The following is a 290-amino-acid chain: 4-hydroxybenzoate octaprenyltransferase (290 aa).

A run of 8 helical transmembrane segments spans residues 21 to 41 (IGTM…ADGM), 44 to 64 (LRVL…GCII), 97 to 117 (LFVV…PLVV), 143 to 163 (FLGV…TGEV), 168 to 188 (WWLF…YAMV), 211 to 231 (EIIG…GWSG), 235 to 255 (LLYG…QRLI), and 270 to 290 (NNWA…FAAL).

It belongs to the UbiA prenyltransferase family. It depends on Mg(2+) as a cofactor.

The protein localises to the cell inner membrane. The enzyme catalyses all-trans-octaprenyl diphosphate + 4-hydroxybenzoate = 4-hydroxy-3-(all-trans-octaprenyl)benzoate + diphosphate. It functions in the pathway cofactor biosynthesis; ubiquinone biosynthesis. In terms of biological role, catalyzes the prenylation of para-hydroxybenzoate (PHB) with an all-trans polyprenyl group. Mediates the second step in the final reaction sequence of ubiquinone-8 (UQ-8) biosynthesis, which is the condensation of the polyisoprenoid side chain with PHB, generating the first membrane-bound Q intermediate 3-octaprenyl-4-hydroxybenzoate. The sequence is that of 4-hydroxybenzoate octaprenyltransferase from Shewanella amazonensis (strain ATCC BAA-1098 / SB2B).